The chain runs to 475 residues: Glutamate--tRNA ligase (475 aa).

The 'HIGH' region motif lies at 8 to 18 (PSPTGTLHIGT). Positions 247 to 251 (KLSKR) match the 'KMSKS' region motif. An ATP-binding site is contributed by K250.

Belongs to the class-I aminoacyl-tRNA synthetase family. Glutamate--tRNA ligase type 1 subfamily. As to quaternary structure, monomer.

The protein resides in the cytoplasm. The enzyme catalyses tRNA(Glu) + L-glutamate + ATP = L-glutamyl-tRNA(Glu) + AMP + diphosphate. Its function is as follows. Catalyzes the attachment of glutamate to tRNA(Glu) in a two-step reaction: glutamate is first activated by ATP to form Glu-AMP and then transferred to the acceptor end of tRNA(Glu). This Synechococcus sp. (strain RCC307) protein is Glutamate--tRNA ligase.